A 655-amino-acid chain; its full sequence is p-hydroxybenzoic acid efflux pump subunit AaeB (655 aa).

The next 11 membrane-spanning stretches (helical) occupy residues 13–33 (FAVK…HFQL), 38–58 (WAVL…GGEP), 69–89 (LRII…IAMI), 93–113 (LLMI…SSLV), 121–141 (WGLA…EPLL), 152–172 (EIVI…PRSI), 370–390 (LFWL…IAVV), 407–427 (FIYG…VIIP), 431–451 (QSML…GIEV), 459–479 (MGAL…TFHF), and 482–502 (FLDS…VILL).

The protein belongs to the aromatic acid exporter ArAE (TC 2.A.85) family.

The protein localises to the cell inner membrane. Its function is as follows. Forms an efflux pump with AaeA. Could function as a metabolic relief valve, allowing to eliminate certain compounds when they accumulate to high levels in the cell. This chain is p-hydroxybenzoic acid efflux pump subunit AaeB, found in Shigella sonnei (strain Ss046).